The sequence spans 382 residues: Succinyl-diaminopimelate desuccinylase (382 aa).

His-73 is a Zn(2+) binding site. Asp-75 is an active-site residue. Asp-106 is a binding site for Zn(2+). Glu-140 serves as the catalytic Proton acceptor. Zn(2+) is bound by residues Glu-141, Glu-169, and His-355.

It belongs to the peptidase M20A family. DapE subfamily. As to quaternary structure, homodimer. Zn(2+) is required as a cofactor. It depends on Co(2+) as a cofactor.

It catalyses the reaction N-succinyl-(2S,6S)-2,6-diaminopimelate + H2O = (2S,6S)-2,6-diaminopimelate + succinate. The protein operates within amino-acid biosynthesis; L-lysine biosynthesis via DAP pathway; LL-2,6-diaminopimelate from (S)-tetrahydrodipicolinate (succinylase route): step 3/3. Catalyzes the hydrolysis of N-succinyl-L,L-diaminopimelic acid (SDAP), forming succinate and LL-2,6-diaminopimelate (DAP), an intermediate involved in the bacterial biosynthesis of lysine and meso-diaminopimelic acid, an essential component of bacterial cell walls. This is Succinyl-diaminopimelate desuccinylase from Cellvibrio japonicus (strain Ueda107) (Pseudomonas fluorescens subsp. cellulosa).